Reading from the N-terminus, the 304-residue chain is uncharacterized protein (304 aa).

72–79 (GPTGSGKT) contacts ATP.

Belongs to the CbbQ/NirQ/NorQ/GpvN family.

This is an uncharacterized protein from Bacillus subtilis (strain 168).